A 1966-amino-acid polypeptide reads, in one-letter code: MENSHPPHHHHQQPPPQPGPSGERRNHHWRSYKLMIDPALKKGHHKLYRYDGQHFSLAMSSNRPVEIVEDPRVVGIWTKNKELELSVPKFKIDEFYVGPVPPKQVTFAKLNDNIRENFLRDMCKKYGEVEEVEILYNPKTKKHLGIAKVVFATVRGAKDAVQHLHSTSVMGNIIHVELDTKGETRMRFYELLVTGRYTPQTLPVGELDAVSPIVNETLQLSDALKRLKDGGLSAGCGSGSSSVTPNSGGTPFSQDTAYSSCRLDTPNSYGQGTPLTPRLGTPFSQDSSYSSRQPTPSYLFSQDPAVTFKARRHESKFTDAYNRRHEHHYVHNSPAVTAVAGATAAFRGSSDLPFGAVGGTGGSSGPPFKAQPQDSATFAHTPPPAQATPAPGFKSAFSPYQTPVAHFPPPPEEPTATAAFGARDSGEFRRAPAPPPLPPAEPLAKEKPGTPPGPPPPDTNSMELGGRPTFGWSPEPCDSPGTPTLESSPAGPEKPHDSLDSRIEMLLKEQRTKLLFLREPDSDTELQMEGSPISSSSSQLSPLAPFGTNSQPGFRGPTPPSSRPSSTGLEDISPTPLPDSDEDEELDLGLGPRPPPEPGPPDPAGLLSQTAEVALDLVGDRTPTSEKMDEGQQSSGEDMEISDDEMPSAPITSADCPKPMVVTPGAAAVAAPSVLAPTLPLPPPPGFPPLPPPPPPPPPQPGFPMPPPLPPPPPPPPPAHPAVTVPPPPLPAPPGVPPPPILPPLPPFPPGLFPVMQVDMSHVLGGQWGGMPMSFQMQTQVLSRLMTGQGACPYPPFMAAAAAAASAGLQFVNLPPYRGPFSLSNSGPGRGQHWPPLPKFDPSVPPPGYMPRQEDPHKATVDGVLLVVLKELKAIMKRDLNRKMVEVVAFRAFDEWWDKKERMAKASLTPVKSGEHKDEDRPKPKDRIASCLLESWGKGEGLGYEGLGLGIGLRGAIRLPSFKVKRKEPPDTTSSGDQKRLRPSTSVDEEDEESERERDRDMADTPCELAKRDPKGVGVRRRPARPLELDSGGEEDEKESLSASSSSSASSSSGSSTTSPSSSASDKEEEQESTEEEEEAEEEEEEEVPRSQLSSSSTSSTSDKDDDDDDSDDRDESENDDEDTALSEASEKDEGDSDEEETVSIVTSKAEATSSSESSESSEFESSSESSPSSSEDEEEVVAREEEEEEEEEEMVAEESMASAGPEDFEQDGEEAALAPGAPAVDSLGMEEEVDIETEAVAPEERPSMLDEPPLPVGVEEPADSREPPEEPGLSQEGAMLLSPEPPAKEVEARPPLSPERAPEHDLEVEPEPPMMLPLPLQPPLPPPRPPRPPSPPPEPETTDASHPSVPPEPLAEDHPPHTPGLCGSLAKSQSTETVPATPGGEPPLSGGSSGLSLSSPQVPGSPFSYPAPSPSLSSGGLPRTPGRDFSFTPTFSEPSGPLLLPVCPLPTGRRDERSGPLASPVLLETGLPLPLPLPLPLPLALPAVLRAQARAPTPLPPLLPAPLASCPPPMKRKPGRPRRSPPSMLSLDGPLVRPPAGAALGRELLLLPGQPQTPVFPSTHDPRTVTLDFRNAGIPAPPPPLPPQPPPPPPPPPVEPTKLPFKELDNQWPSEAIPPGPRGRDEVTEEYMELAKSRGPWRRPPKKRHEDLVPPAGSPELSPPQPLFRPRSEFEEMTILYDIWNGGIDEEDIRFLCVTYERLLQQDNGMDWLNDTLWVYHPSTSLSSAKKKKRDDGIREHVTGCARSEGFYTIDKKDKLRYLNSSRASTDEPPADTQGMSIPAQPHASTRAGSERRSEQRRLLSSFTGSCDSDLLKFNQLKFRKKKLKFCKSHIHDWGLFAMEPIAADEMVIEYVGQNIRQVIADMREKRYEDEGIGSSYMFRVDHDTIIDATKCGNFARFINHSCNPNCYAKVITVESQKKIVIYSKQHINVNEEITYDYKFPIEDVKIPCLCGSENCRGTLN.

Basic residues predominate over residues 1 to 12 (MENSHPPHHHHQ). The interval 1–26 (MENSHPPHHHHQQPPPQPGPSGERRN) is disordered. An interaction with WDR82 region spans residues 68–98 (VEDPRVVGIWTKNKELELSVPKFKIDEFYVG). Residues 93 to 181 (DEFYVGPVPP…NIIHVELDTK (89 aa)) enclose the RRM domain. Disordered stretches follow at residues 235–302 (GCGS…LFSQ), 357–660 (VGGT…PKPM), 675–719 (LAPT…PPPA), 963–1462 (KVKR…SGPL), 1501–1541 (PPLL…RPPA), 1555–1606 (QPQT…KLPF), and 1636–1668 (AKSR…PQPL). Composition is skewed to polar residues over residues 243–259 (VTPN…TAYS), 265–274 (TPNSYGQGTP), and 282–300 (PFSQ…SYLF). 2 stretches are compositionally biased toward pro residues: residues 432–441 (PAPPPLPPAE) and 449–458 (GTPPGPPPPD). Over residues 493–521 (EKPHDSLDSRIEMLLKEQRTKLLFLREPD) the composition is skewed to basic and acidic residues. The segment covering 531-543 (SPISSSSSQLSPL) has biased composition (low complexity). Over residues 592 to 603 (PRPPPEPGPPDP) the composition is skewed to pro residues. The segment covering 637–646 (EDMEISDDEM) has biased composition (acidic residues). Residues 679 to 719 (LPLPPPPGFPPLPPPPPPPPPQPGFPMPPPLPPPPPPPPPA) show a composition bias toward pro residues. 2 positions are modified to phosphoserine: Ser-986 and Ser-994. Positions 995–1015 (ERERDRDMADTPCELAKRDPK) are enriched in basic and acidic residues. At Ser-1031 the chain carries Phosphoserine. Residues 1041–1064 (LSASSSSSASSSSGSSTTSPSSSA) show a composition bias toward low complexity. 2 stretches are compositionally biased toward acidic residues: residues 1067–1087 (KEEE…EEEE) and 1104–1142 (KDDD…EEET). A compositionally biased stretch (low complexity) spans 1148–1174 (SKAEATSSSESSESSEFESSSESSPSS). Residues 1173-1204 (SSSEDEEEVVAREEEEEEEEEEMVAEESMASA) adopt a coiled-coil conformation. Acidic residues-rich tracts occupy residues 1175–1197 (SEDE…EMVA) and 1229–1238 (GMEEEVDIET). Phosphoserine is present on residues Ser-1265, Ser-1283, and Ser-1335. A compositionally biased stretch (pro residues) spans 1312–1340 (EPPMMLPLPLQPPLPPPRPPRPPSPPPEP). Residues 1383–1425 (PGGEPPLSGGSSGLSLSSPQVPGSPFSYPAPSPSLSSGGLPRT) show a composition bias toward low complexity. Residues 1501 to 1514 (PPLLPAPLASCPPP) are compositionally biased toward pro residues. Residues 1515–1524 (MKRKPGRPRR) show a composition bias toward basic residues. Over residues 1580–1600 (PAPPPPLPPQPPPPPPPPPVE) the composition is skewed to pro residues. Ser-1659 and Ser-1663 each carry phosphoserine. Positions 1745–1750 (GCARSE) match the WDR5 interaction motif (WIN) motif. A disordered region spans residues 1767 to 1800 (SRASTDEPPADTQGMSIPAQPHASTRAGSERRSE). The short motif at 1798-1803 (RSEQRR) is the RxxxRR motif element. In terms of domain architecture, SET spans 1827–1944 (KKLKFCKSHI…VNEEITYDYK (118 aa)). Residue Tyr-1943 participates in S-adenosyl-L-methionine binding. Positions 1950–1966 (VKIPCLCGSENCRGTLN) constitute a Post-SET domain.

This sequence belongs to the class V-like SAM-binding methyltransferase superfamily. Component of the SET1B/COMPASS complex composed of the catalytic subunit SETD1B, WDR5, WDR82, RBBP5, ASH2L/ASH2, CXXC1/CFP1, HCFC1, DPY30 homotrimer and BOD1. Forms a core complex with the evolutionary conserved subcomplex WRAD composed of WDR5, RBBP5, ASH2L/ASH2 and DPY30 subunits; WRAD differentially stimulates the methyltransferase activity. Interacts with HCFC1 and ASH2L/ASH2. Interacts (via N-terminal region) with WDR82. Interacts (via the RRM domain) with hyperphosphorylated C-terminal domain (CTD) of RNA polymerase II large subunit (POLR2A) only in the presence of WDR82. Binds specifically to CTD heptad repeats phosphorylated on 'Ser-5' of each heptad. Interacts with RBM15. Interacts (via WIN motif) with WDR5.

The protein resides in the nucleus. It localises to the nucleus speckle. It is found in the chromosome. Its subcellular location is the cytoplasm. It carries out the reaction L-lysyl(4)-[histone H3] + S-adenosyl-L-methionine = N(6)-methyl-L-lysyl(4)-[histone H3] + S-adenosyl-L-homocysteine + H(+). The enzyme catalyses N(6)-methyl-L-lysyl(4)-[histone H3] + S-adenosyl-L-methionine = N(6),N(6)-dimethyl-L-lysyl(4)-[histone H3] + S-adenosyl-L-homocysteine + H(+). The catalysed reaction is N(6),N(6)-dimethyl-L-lysyl(4)-[histone H3] + S-adenosyl-L-methionine = N(6),N(6),N(6)-trimethyl-L-lysyl(4)-[histone H3] + S-adenosyl-L-homocysteine + H(+). Its function is as follows. Histone methyltransferase that catalyzes methyl group transfer from S-adenosyl-L-methionine to the epsilon-amino group of 'Lys-4' of histone H3 (H3K4) via a non-processive mechanism. Part of chromatin remodeling machinery, forms H3K4me1, H3K4me2 and H3K4me3 methylation marks at active chromatin sites where transcription and DNA repair take place. Plays an essential role in regulating the transcriptional programming of multipotent hematopoietic progenitor cells and lymphoid lineage specification during hematopoiesis. This is Histone-lysine N-methyltransferase SETD1B (SETD1B) from Homo sapiens (Human).